We begin with the raw amino-acid sequence, 487 residues long: UDP-N-acetylmuramoyl-L-alanyl-D-glutamate--2,6-diaminopimelate ligase (487 aa).

A UDP-N-acetyl-alpha-D-muramoyl-L-alanyl-D-glutamate-binding site is contributed by serine 30. An ATP-binding site is contributed by 109–115; sequence GTNGKTS. UDP-N-acetyl-alpha-D-muramoyl-L-alanyl-D-glutamate contacts are provided by residues 151-152, serine 178, and arginine 186; that span reads TT. The residue at position 218 (lysine 218) is an N6-carboxylysine. Meso-2,6-diaminopimelate is bound by residues arginine 379, 403 to 406, glycine 455, and glutamate 459; that span reads DNPR. Residues 403-406 carry the Meso-diaminopimelate recognition motif motif; the sequence is DNPR.

The protein belongs to the MurCDEF family. MurE subfamily. Mg(2+) serves as cofactor. Post-translationally, carboxylation is probably crucial for Mg(2+) binding and, consequently, for the gamma-phosphate positioning of ATP.

It is found in the cytoplasm. The catalysed reaction is UDP-N-acetyl-alpha-D-muramoyl-L-alanyl-D-glutamate + meso-2,6-diaminopimelate + ATP = UDP-N-acetyl-alpha-D-muramoyl-L-alanyl-gamma-D-glutamyl-meso-2,6-diaminopimelate + ADP + phosphate + H(+). It participates in cell wall biogenesis; peptidoglycan biosynthesis. Its function is as follows. Catalyzes the addition of meso-diaminopimelic acid to the nucleotide precursor UDP-N-acetylmuramoyl-L-alanyl-D-glutamate (UMAG) in the biosynthesis of bacterial cell-wall peptidoglycan. The sequence is that of UDP-N-acetylmuramoyl-L-alanyl-D-glutamate--2,6-diaminopimelate ligase from Alkaliphilus oremlandii (strain OhILAs) (Clostridium oremlandii (strain OhILAs)).